A 776-amino-acid chain; its full sequence is Calcium-independent phospholipase A2-gamma (776 aa).

2 stretches are compositionally biased toward basic and acidic residues: residues 226 to 238 (RQLQDKPCLEESK) and 307 to 331 (LKSDPKSQPEEEEEPSKTDEPICKD). Disordered regions lie at residues 226-274 (RQLQ…EALP) and 306-331 (KLKSDPKSQPEEEEEPSKTDEPICKD). In terms of domain architecture, PNPLA spans 439–634 (LAIDGGGTRG…LLNNPSALAL (196 aa)). A GXGXXG motif is present at residues 443 to 448 (GGGTRG). Residues 469-489 (LFDYICGVSTGAILAFMLGLF) form a helical membrane-spanning segment. The GXSXG signature appears at 475-479 (GVSTG). Ser477 functions as the Nucleophile in the catalytic mechanism. Catalysis depends on Asp621, which acts as the Proton acceptor. Residues 621 to 623 (DGG) carry the DGA/G motif. Residue Lys730 is modified to N6-succinyllysine.

Its subcellular location is the endoplasmic reticulum membrane. It localises to the microsome membrane. The protein localises to the mitochondrion membrane. It is found in the peroxisome membrane. It catalyses the reaction a 1,2-diacyl-sn-glycero-3-phosphocholine + H2O = a 1-acyl-sn-glycero-3-phosphocholine + a fatty acid + H(+). It carries out the reaction a 1,2-diacyl-sn-glycero-3-phosphocholine + H2O = a 2-acyl-sn-glycero-3-phosphocholine + a fatty acid + H(+). The enzyme catalyses a 1,2-diacyl-sn-glycero-3-phosphoethanolamine + H2O = a 1-acyl-sn-glycero-3-phosphoethanolamine + a fatty acid + H(+). The catalysed reaction is a 1-O-(1Z-alkenyl)-2-acyl-sn-glycero-3-phosphocholine + H2O = a 1-O-(1Z-alkenyl)-sn-glycero-3-phosphocholine + a fatty acid + H(+). It catalyses the reaction a 1-acyl-sn-glycero-3-phosphocholine + H2O = sn-glycerol 3-phosphocholine + a fatty acid + H(+). It carries out the reaction 1-acyl-2-(9Z,12Z)-octadecadienoyl-sn-glycero-3-phosphocholine + H2O = a 1-acyl-sn-glycero-3-phosphocholine + (9Z,12Z)-octadecadienoate + H(+). The enzyme catalyses 1-acyl-2-(5Z,8Z,11Z,14Z-eicosatetraenoyl)-sn-glycero-3-phosphocholine + H2O = a 1-acyl-sn-glycero-3-phosphocholine + (5Z,8Z,11Z,14Z)-eicosatetraenoate + H(+). The catalysed reaction is 1-hexadecanoyl-2-(5Z,8Z,11Z,14Z-eicosatetraenoyl)-sn-glycero-3-phosphocholine + H2O = 1-hexadecanoyl-sn-glycero-3-phosphocholine + (5Z,8Z,11Z,14Z)-eicosatetraenoate + H(+). It catalyses the reaction 1-octadecanoyl-2-(9Z-octadecenoyl)-sn-glycero-3-phosphocholine + H2O = 1-octadecanoyl-sn-glycero-3-phosphocholine + (9Z)-octadecenoate + H(+). It carries out the reaction 1-hexadecanoyl-2-(9Z-octadecenoyl)-sn-glycero-3-phosphocholine + H2O = 1-hexadecanoyl-sn-glycero-3-phosphocholine + (9Z)-octadecenoate + H(+). The enzyme catalyses 1-hexadecanoyl-2-(9Z,12Z-octadecadienoyl)-sn-glycero-3-phosphocholine + H2O = (9Z,12Z)-octadecadienoate + 1-hexadecanoyl-sn-glycero-3-phosphocholine + H(+). The catalysed reaction is 1-acyl-2-(9Z,12Z)-octadecadienoyl-sn-glycero-3-phosphoethanolamine + H2O = a 1-acyl-sn-glycero-3-phosphoethanolamine + (9Z,12Z)-octadecadienoate + H(+). It catalyses the reaction 1-acyl-2-(5Z,8Z,11Z,14Z)-eicosatetraenoyl-sn-glycero-3-phosphoethanolamine + H2O = a 1-acyl-sn-glycero-3-phosphoethanolamine + (5Z,8Z,11Z,14Z)-eicosatetraenoate + H(+). It carries out the reaction 1-hexadecanoyl-2-(5Z,8Z,11Z,14Z-eicosatetraenoyl)-sn-glycero-3-phosphoethanolamine + H2O = 1-hexadecanoyl-sn-glycero-3-phosphoethanolamine + (5Z,8Z,11Z,14Z)-eicosatetraenoate + H(+). The enzyme catalyses 1-hexadecanoyl-2-(5Z,8Z,11Z,14Z-eicosatetraenoyl)-sn-glycero-3-phosphocholine + H2O = 2-(5Z,8Z,11Z,14Z)-eicosatetraenoyl-sn-glycero-3-phosphocholine + hexadecanoate + H(+). The catalysed reaction is 1-octadecanoyl-2-(9Z-octadecenoyl)-sn-glycero-3-phosphocholine + H2O = 2-(9Z-octadecenoyl)-sn-glycero-3-phosphocholine + octadecanoate + H(+). It catalyses the reaction 1-hexadecanoyl-2-(4Z,7Z,10Z,13Z,16Z,19Z-docosahexaenoyl)-sn-glycero-3-phosphocholine + H2O = 2-(4Z,7Z,10Z,13Z,16Z,19Z-docosahexaenoyl)-sn-glycero-3-phosphocholine + hexadecanoate + H(+). It carries out the reaction 1-O-(1Z)-hexadecenyl-2 (5Z,8Z,11Z,14Z)-eicosatetraenoyl-sn-glycero-3-phosphocholine + H2O = 1-(1Z-hexadecenyl)-sn-glycero-3-phosphocholine + (5Z,8Z,11Z,14Z)-eicosatetraenoate + H(+). The enzyme catalyses 1-O-(1Z-hexadecenyl)-2-(9Z-octadecenoyl)-sn-glycero-3-phosphocholine + H2O = 1-(1Z-hexadecenyl)-sn-glycero-3-phosphocholine + (9Z)-octadecenoate + H(+). The catalysed reaction is 1-hexadecanoyl-sn-glycero-3-phosphocholine + H2O = sn-glycerol 3-phosphocholine + hexadecanoate + H(+). It catalyses the reaction 1',3'-bis-[1,2-di-(9Z,12Z-octadecadienoyl)-sn-glycero-3-phospho]-glycerol + H2O = 1'-[1,2-di-(9Z,12Z-octadecadienoyl)-sn-glycero-3-phospho]-3'-[1-(9Z,12Z-octadecadienoyl)-sn-glycero-3-phospho]-glycerol + (9Z,12Z)-octadecadienoate + H(+). It carries out the reaction 1'-[1-acyl-2-(9-hydroxy-(10E,12Z)-octadecadienoyl)-sn-glycero-3-phospho]-3'-[1,2-diacyl-sn-glycero-3-phospho]-glycerol + H2O = 9-hydroxy-(10E,12Z)-octadecadienoate + 1'-[1,2-diacyl-sn-glycero-3-phospho],3'-[1-acyl-sn-glycero-3-phospho]-glycerol + H(+). It participates in phospholipid metabolism. With respect to regulation, calcium-independent phospholipase. Functionally, calcium-independent and membrane-bound phospholipase, that catalyzes the esterolytic cleavage of fatty acids from glycerophospholipids to yield free fatty acids and lysophospholipids, hence regulating membrane physical properties and the release of lipid second messengers and growth factors. Hydrolyzes phosphatidylethanolamine, phosphatidylcholine and probably phosphatidylinositol with a possible preference for the former. Has also a broad substrate specificity in terms of fatty acid moieties, hydrolyzing saturated and mono-unsaturated fatty acids at nearly equal rates from either the sn-1 or sn-2 position in diacyl phosphatidylcholine. However, has a weak activity toward polyunsaturated fatty acids at the sn-2 position, and thereby favors the production of 2-arachidonoyl lysophosphatidylcholine, a key branch point metabolite in eicosanoid signaling. On the other hand, can produce arachidonic acid from the sn-1 position of diacyl phospholipid and from the sn-2 position of arachidonate-containing plasmalogen substrates. Therefore, plays an important role in the mobilization of arachidonic acid in response to cellular stimuli and the generation of lipid second messengers. Can also hydrolyze lysophosphatidylcholine. In the mitochondrial compartment, catalyzes the hydrolysis and release of oxidized aliphatic chains from cardiolipin and integrates mitochondrial bioenergetics and signaling. It is essential for maintaining efficient bioenergetic mitochondrial function through tailoring mitochondrial membrane lipid metabolism and composition. The polypeptide is Calcium-independent phospholipase A2-gamma (Rattus norvegicus (Rat)).